The primary structure comprises 77 residues: Translational regulator CsrA (77 aa).

It belongs to the CsrA/RsmA family. As to quaternary structure, homodimer; the beta-strands of each monomer intercalate to form a hydrophobic core, while the alpha-helices form wings that extend away from the core.

The protein localises to the cytoplasm. Its function is as follows. A translational regulator that binds mRNA to regulate translation initiation and/or mRNA stability. Usually binds in the 5'-UTR at or near the Shine-Dalgarno sequence preventing ribosome-binding, thus repressing translation. Its main target seems to be the major flagellin gene, while its function is anatagonized by FliW. This is Translational regulator CsrA from Pseudarthrobacter chlorophenolicus (strain ATCC 700700 / DSM 12829 / CIP 107037 / JCM 12360 / KCTC 9906 / NCIMB 13794 / A6) (Arthrobacter chlorophenolicus).